The primary structure comprises 505 residues: 2,3-bisphosphoglycerate-independent phosphoglycerate mutase (505 aa).

Residues Asp12 and Ser62 each contribute to the Mn(2+) site. The Phosphoserine intermediate role is filled by Ser62. Substrate is bound by residues His123, 153 to 154, Arg185, Arg191, 257 to 260, and Lys330; these read RD and RPDR. Residues Asp397, His401, Asp438, His439, and His456 each coordinate Mn(2+).

This sequence belongs to the BPG-independent phosphoglycerate mutase family. Monomer. Mn(2+) is required as a cofactor.

It carries out the reaction (2R)-2-phosphoglycerate = (2R)-3-phosphoglycerate. Its pathway is carbohydrate degradation; glycolysis; pyruvate from D-glyceraldehyde 3-phosphate: step 3/5. Catalyzes the interconversion of 2-phosphoglycerate and 3-phosphoglycerate. The chain is 2,3-bisphosphoglycerate-independent phosphoglycerate mutase from Staphylococcus aureus (strain MRSA252).